The sequence spans 484 residues: Glutamate--tRNA ligase (484 aa).

The short motif at 11–21 (PSPTGYLHIGN) is the 'HIGH' region element. Positions 252–256 (KLSKR) match the 'KMSKS' region motif. Lysine 255 lines the ATP pocket.

It belongs to the class-I aminoacyl-tRNA synthetase family. Glutamate--tRNA ligase type 1 subfamily. In terms of assembly, monomer.

The protein localises to the cytoplasm. It carries out the reaction tRNA(Glu) + L-glutamate + ATP = L-glutamyl-tRNA(Glu) + AMP + diphosphate. Its function is as follows. Catalyzes the attachment of glutamate to tRNA(Glu) in a two-step reaction: glutamate is first activated by ATP to form Glu-AMP and then transferred to the acceptor end of tRNA(Glu). This is Glutamate--tRNA ligase from Staphylococcus epidermidis (strain ATCC 35984 / DSM 28319 / BCRC 17069 / CCUG 31568 / BM 3577 / RP62A).